A 306-amino-acid polypeptide reads, in one-letter code: Methionyl-tRNA formyltransferase (306 aa).

Residue S110–P113 participates in (6S)-5,6,7,8-tetrahydrofolate binding.

It belongs to the Fmt family.

The enzyme catalyses L-methionyl-tRNA(fMet) + (6R)-10-formyltetrahydrofolate = N-formyl-L-methionyl-tRNA(fMet) + (6S)-5,6,7,8-tetrahydrofolate + H(+). Its function is as follows. Attaches a formyl group to the free amino group of methionyl-tRNA(fMet). The formyl group appears to play a dual role in the initiator identity of N-formylmethionyl-tRNA by promoting its recognition by IF2 and preventing the misappropriation of this tRNA by the elongation apparatus. The sequence is that of Methionyl-tRNA formyltransferase from Brucella melitensis biotype 2 (strain ATCC 23457).